Consider the following 125-residue polypeptide: Large ribosomal subunit protein bL12 (125 aa).

The protein belongs to the bacterial ribosomal protein bL12 family. As to quaternary structure, homodimer. Part of the ribosomal stalk of the 50S ribosomal subunit. Forms a multimeric L10(L12)X complex, where L10 forms an elongated spine to which 2 to 4 L12 dimers bind in a sequential fashion. Binds GTP-bound translation factors.

In terms of biological role, forms part of the ribosomal stalk which helps the ribosome interact with GTP-bound translation factors. Is thus essential for accurate translation. In Azorhizobium caulinodans (strain ATCC 43989 / DSM 5975 / JCM 20966 / LMG 6465 / NBRC 14845 / NCIMB 13405 / ORS 571), this protein is Large ribosomal subunit protein bL12.